We begin with the raw amino-acid sequence, 35 residues long: MIPGNPSPGADLAVSKHFFSLSWFCGLLLLESKQK.

Expressed in gastric mucosa.

The chain is Putative gastric cancer-related gene 224 protein (GCRG224) from Homo sapiens (Human).